Consider the following 118-residue polypeptide: Ribonuclease P protein component (118 aa).

The protein belongs to the RnpA family. In terms of assembly, consists of a catalytic RNA component (M1 or rnpB) and a protein subunit.

The enzyme catalyses Endonucleolytic cleavage of RNA, removing 5'-extranucleotides from tRNA precursor.. RNaseP catalyzes the removal of the 5'-leader sequence from pre-tRNA to produce the mature 5'-terminus. It can also cleave other RNA substrates such as 4.5S RNA. The protein component plays an auxiliary but essential role in vivo by binding to the 5'-leader sequence and broadening the substrate specificity of the ribozyme. The chain is Ribonuclease P protein component from Ureaplasma urealyticum serovar 10 (strain ATCC 33699 / Western).